A 373-amino-acid polypeptide reads, in one-letter code: Heterogeneous nuclear ribonucleoprotein A3 homolog 1 (373 aa).

The interval 1–25 (MPRGGMDDHWPSSDDQGHDPKEPEQ) is disordered. 2 RRM domains span residues 27–110 (RKLF…DSAR) and 118–206 (KKIF…SAQR). Disordered regions lie at residues 196–218 (KQEMQTASAQRGRGGGGSNFMGR) and 319–373 (DFGN…GRRF). The span at 207-218 (GRGGGGSNFMGR) shows a compositional bias: gly residues. Over residues 319 to 333 (DFGNYGGQQQSNYGP) the composition is skewed to low complexity. The segment covering 334-373 (MKGGSFSGRSSGGSGSGPYGGGYGSGGGGGGGGSYGGRRF) has biased composition (gly residues).

It is found in the nucleus. In Xenopus laevis (African clawed frog), this protein is Heterogeneous nuclear ribonucleoprotein A3 homolog 1.